Reading from the N-terminus, the 403-residue chain is Argininosuccinate synthase (403 aa).

ATP-binding positions include 10–18 (AYSGGLDTS) and Ala-37. Tyr-89 is an L-citrulline binding site. An ATP-binding site is contributed by Gly-119. The L-aspartate site is built by Thr-121, Asn-125, and Asp-126. Asn-125 provides a ligand contact to L-citrulline. The L-citrulline site is built by Arg-129, Ser-178, Ser-187, Glu-263, and Tyr-275.

Belongs to the argininosuccinate synthase family. Type 1 subfamily. As to quaternary structure, homotetramer.

The protein localises to the cytoplasm. The enzyme catalyses L-citrulline + L-aspartate + ATP = 2-(N(omega)-L-arginino)succinate + AMP + diphosphate + H(+). Its pathway is amino-acid biosynthesis; L-arginine biosynthesis; L-arginine from L-ornithine and carbamoyl phosphate: step 2/3. The sequence is that of Argininosuccinate synthase from Idiomarina loihiensis (strain ATCC BAA-735 / DSM 15497 / L2-TR).